We begin with the raw amino-acid sequence, 226 residues long: PKHD-type hydroxylase Daci_1172 (226 aa).

The 101-residue stretch at 78-178 folds into the Fe2OG dioxygenase domain; it reads KVLPPRFNRY…RYASFFWTHS (101 aa). Fe cation contacts are provided by H96, D98, and H159. 2-oxoglutarate is bound at residue R169.

Fe(2+) is required as a cofactor. L-ascorbate serves as cofactor.

This Delftia acidovorans (strain DSM 14801 / SPH-1) protein is PKHD-type hydroxylase Daci_1172.